We begin with the raw amino-acid sequence, 267 residues long: 4-hydroxy-tetrahydrodipicolinate reductase (267 aa).

Residues 8–13 and Asp34 each bind NAD(+); that span reads GAAGRM. Arg35 serves as a coordination point for NADP(+). NAD(+) is bound by residues 98 to 100 and 122 to 125; these read GTT and AANF. The active-site Proton donor/acceptor is His155. His156 is a binding site for (S)-2,3,4,5-tetrahydrodipicolinate. Lys159 serves as the catalytic Proton donor. 165–166 serves as a coordination point for (S)-2,3,4,5-tetrahydrodipicolinate; the sequence is GT.

Belongs to the DapB family.

Its subcellular location is the cytoplasm. It catalyses the reaction (S)-2,3,4,5-tetrahydrodipicolinate + NAD(+) + H2O = (2S,4S)-4-hydroxy-2,3,4,5-tetrahydrodipicolinate + NADH + H(+). It carries out the reaction (S)-2,3,4,5-tetrahydrodipicolinate + NADP(+) + H2O = (2S,4S)-4-hydroxy-2,3,4,5-tetrahydrodipicolinate + NADPH + H(+). It participates in amino-acid biosynthesis; L-lysine biosynthesis via DAP pathway; (S)-tetrahydrodipicolinate from L-aspartate: step 4/4. Functionally, catalyzes the conversion of 4-hydroxy-tetrahydrodipicolinate (HTPA) to tetrahydrodipicolinate. The chain is 4-hydroxy-tetrahydrodipicolinate reductase from Ectopseudomonas mendocina (strain ymp) (Pseudomonas mendocina).